The chain runs to 186 residues: Large ribosomal subunit protein uL22 (186 aa).

Ser158 carries the post-translational modification Phosphoserine. The disordered stretch occupies residues 159–186; it reads KATDDEPAKKKLSKKKLQRQKEKMLRSE. Thr161 carries the post-translational modification Phosphothreonine. The segment covering 177–186 has biased composition (basic and acidic residues); it reads RQKEKMLRSE.

This sequence belongs to the universal ribosomal protein uL22 family.

The sequence is that of Large ribosomal subunit protein uL22 (RpL17) from Drosophila melanogaster (Fruit fly).